Here is a 348-residue protein sequence, read N- to C-terminus: Protein RecA (348 aa).

66–73 provides a ligand contact to ATP; it reads GPESSGKT.

It belongs to the RecA family.

The protein resides in the cytoplasm. Its function is as follows. Can catalyze the hydrolysis of ATP in the presence of single-stranded DNA, the ATP-dependent uptake of single-stranded DNA by duplex DNA, and the ATP-dependent hybridization of homologous single-stranded DNAs. It interacts with LexA causing its activation and leading to its autocatalytic cleavage. This chain is Protein RecA, found in Legionella pneumophila (strain Lens).